The chain runs to 793 residues: Phenylalanine--tRNA ligase beta subunit (793 aa).

Residues 39–148 (AAPFKGVKAA…EGDFPGVDLH (110 aa)) enclose the tRNA-binding domain. The B5 domain occupies 401 to 476 (PPQATIILRK…RLYGYDRLPS (76 aa)). Mg(2+) contacts are provided by Asp-454, Asp-460, Glu-463, and Glu-464. The region spanning 699-792 (SKFPAIRRDI…LVTELGAIIR (94 aa)) is the FDX-ACB domain.

The protein belongs to the phenylalanyl-tRNA synthetase beta subunit family. Type 1 subfamily. In terms of assembly, tetramer of two alpha and two beta subunits. Mg(2+) serves as cofactor.

Its subcellular location is the cytoplasm. It catalyses the reaction tRNA(Phe) + L-phenylalanine + ATP = L-phenylalanyl-tRNA(Phe) + AMP + diphosphate + H(+). The protein is Phenylalanine--tRNA ligase beta subunit of Nitrosococcus oceani (strain ATCC 19707 / BCRC 17464 / JCM 30415 / NCIMB 11848 / C-107).